The following is a 302-amino-acid chain: Ubiquitin thioesterase OTU1 (302 aa).

Residues 5-83 (RCKARSGTQP…IVEEDTSKPS (79 aa)) form a UBX-like region. One can recognise an OTU domain in the interval 103–228 (LARRVVPADN…GIHYDPLERK (126 aa)). The segment at 108-114 (VPADNSC) is cys-loop. Residue Asp-111 is part of the active site. Catalysis depends on Cys-114, which acts as the Nucleophile. The variable-loop stretch occupies residues 167 to 177 (IRREETWGGAI). Residues 217-221 (YDGIH) form a his-loop region. Ile-220 contributes to the substrate binding site. His-221 is a catalytic residue. Residues 245-250 (DVVLAQ) are S2 site. The C2H2-type zinc-finger motif lies at 272–296 (LRCMVCQKGLTGQVEAREHAKETGH). Residue His-296 is part of the active site.

It is found in the cytoplasm. The catalysed reaction is Thiol-dependent hydrolysis of ester, thioester, amide, peptide and isopeptide bonds formed by the C-terminal Gly of ubiquitin (a 76-residue protein attached to proteins as an intracellular targeting signal).. Functionally, hydrolase that can remove conjugated ubiquitin from proteins and participates in endoplasmic reticulum-associated degradation (ERAD) for misfolded lumenal proteins. May act by triming the ubiquitin chain on the associated substrate to facilitate their threading through the VCP/p97 pore. Ubiquitin moieties on substrates may present a steric impediment to the threading process when the substrate is transferred to the VCP pore and threaded through VCP's axial channel. Mediates deubiquitination of 'Lys-27'-, 'Lys-29'- and 'Lys-33'-linked polyubiquitin chains. Also able to hydrolyze 'Lys-11'-linked ubiquitin chains. Cleaves both polyubiquitin and di-ubiquitin. In Gallus gallus (Chicken), this protein is Ubiquitin thioesterase OTU1 (YOD1).